The following is a 214-amino-acid chain: Sugar fermentation stimulation protein homolog (214 aa).

Belongs to the SfsA family.

This Aquifex aeolicus (strain VF5) protein is Sugar fermentation stimulation protein homolog.